The chain runs to 468 residues: Glutamine synthetase (468 aa).

In terms of domain architecture, GS beta-grasp spans 11-96; it reads HDVKWIDLRF…LVCDIIEPST (86 aa). Residues 104-468 form the GS catalytic domain; that stretch reads PRAIAHRAEE…PLEYELYYSC (365 aa). Mg(2+) is bound by residues Glu-129 and Glu-131. Glu-207 serves as a coordination point for ATP. Mg(2+) is bound by residues Glu-212 and Glu-220. L-glutamate-binding positions include 264 to 265 and Gly-265; that span reads NG. Residue His-269 coordinates Mg(2+). ATP-binding positions include 271-273 and Ser-273; that span reads HMS. Positions 321, 327, and 339 each coordinate L-glutamate. Arg-339, Arg-344, and Arg-352 together coordinate ATP. Residue Glu-357 participates in Mg(2+) binding. L-glutamate is bound at residue Arg-359. Residue Tyr-397 is modified to O-AMP-tyrosine.

This sequence belongs to the glutamine synthetase family. As to quaternary structure, oligomer of 12 subunits arranged in the form of two hexagons. Mg(2+) serves as cofactor. Requires Mn(2+) as cofactor.

It catalyses the reaction L-glutamate + NH4(+) + ATP = L-glutamine + ADP + phosphate + H(+). With respect to regulation, when cellular nitrogen levels are high, the C-terminal adenylyl transferase (AT) of GlnE inhibits GlnA by covalent transfer of an adenylyl group from ATP to Tyr-397. Conversely, when nitrogen levels are low, the N-terminal adenylyl removase (AR) of GlnE activates GlnA by removing the adenylyl group by phosphorolysis. The fully adenylated enzyme complex is inactive. Catalyzes the formation of glutamine from glutamate and ammonia. In vitro, can also use hydroxylamine, methylamine and ethylamine, with 32%, 7% and 1% activity compared to ammonia, respectively. The sequence is that of Glutamine synthetase from Pseudomonas taetrolens.